A 131-amino-acid polypeptide reads, in one-letter code: Cytochrome b5 (131 aa).

The 77-residue stretch at 3 to 79 folds into the Cytochrome b5 heme-binding domain; that stretch reads AKIFSLDEVS…LEEYLIGSLD (77 aa). H38 and H62 together coordinate heme. The chain crosses the membrane as a helical span at residues 108–125; it reads IILPALAIIGALVYKYVI.

This sequence belongs to the cytochrome b5 family.

It localises to the endoplasmic reticulum membrane. The protein localises to the microsome membrane. Its function is as follows. Membrane bound hemoprotein which function as an electron carrier for several membrane bound oxygenases. In Rhizopus stolonifer (Rhizopus nigricans), this protein is Cytochrome b5.